A 247-amino-acid chain; its full sequence is MSRTFFVGGNFKMNGSLESIKAIVERLNASELDPKTEVVISPPFPYLLLAKESLKKPTVSVAGQNSFDKGDGAFTGEVSVAQLKDVGAKWVILGHSERRTINKESSEWIADKTKYALDNGLDVILCIGETIDEKKAGKTLDVVRSQLDPVIAKIKDWSNVVIAYEPVWAIGTGLAATAEDAQQIHHEIRAYLKDKIGAQADKVRIIYGGSVNGKNSGTFKDKSDVDGFLVGGASLKPEFVDIINSRL.

Asparagine 10 and lysine 12 together coordinate substrate. Residue histidine 95 is the Electrophile of the active site. Glutamate 165 functions as the Proton acceptor in the catalytic mechanism.

This sequence belongs to the triosephosphate isomerase family. Homodimer.

It catalyses the reaction D-glyceraldehyde 3-phosphate = dihydroxyacetone phosphate. Its pathway is carbohydrate biosynthesis; gluconeogenesis. It participates in carbohydrate degradation; glycolysis; D-glyceraldehyde 3-phosphate from glycerone phosphate: step 1/1. The polypeptide is Triosephosphate isomerase (TPI1) (Yarrowia lipolytica (strain CLIB 122 / E 150) (Yeast)).